The primary structure comprises 261 residues: uncharacterized protein (261 aa).

Residues 1-22 (MRDSKRVVLYISIIVLSIFIIG) form the signal peptide. A lipid anchor (N-palmitoyl cysteine) is attached at C23. Residue C23 is the site of S-diacylglycerol cysteine attachment.

It belongs to the staphylococcal tandem lipoprotein family.

Its subcellular location is the cell membrane. This is an uncharacterized protein from Staphylococcus aureus (strain Mu50 / ATCC 700699).